The following is a 183-amino-acid chain: Dual specificity protein phosphatase 22-B (183 aa).

Residues 4–144 enclose the Tyrosine-protein phosphatase domain; that stretch reads GINKVLPDLY…LQEFQTGELQ (141 aa). The active-site Phosphocysteine intermediate is the C88.

Belongs to the protein-tyrosine phosphatase family. Non-receptor class dual specificity subfamily.

The protein resides in the cytoplasm. Its subcellular location is the nucleus. The catalysed reaction is O-phospho-L-tyrosyl-[protein] + H2O = L-tyrosyl-[protein] + phosphate. It carries out the reaction O-phospho-L-seryl-[protein] + H2O = L-seryl-[protein] + phosphate. It catalyses the reaction O-phospho-L-threonyl-[protein] + H2O = L-threonyl-[protein] + phosphate. Activates the Jnk signaling pathway. Dephosphorylates and deactivates p38 and stress-activated protein kinase/c-Jun N-terminal kinase (SAPK/JNK). The polypeptide is Dual specificity protein phosphatase 22-B (dusp22b) (Danio rerio (Zebrafish)).